Reading from the N-terminus, the 466-residue chain is Asparagine--tRNA ligase (466 aa).

The protein belongs to the class-II aminoacyl-tRNA synthetase family. As to quaternary structure, homodimer.

Its subcellular location is the cytoplasm. The catalysed reaction is tRNA(Asn) + L-asparagine + ATP = L-asparaginyl-tRNA(Asn) + AMP + diphosphate + H(+). The chain is Asparagine--tRNA ligase from Shewanella loihica (strain ATCC BAA-1088 / PV-4).